Here is a 1424-residue protein sequence, read N- to C-terminus: S-layer protein A (1424 aa).

The signal sequence occupies residues 1–24; the sequence is MNKLVGLLVSSLFLASILIGIAPA. Asparagine 60, asparagine 70, asparagine 276, asparagine 295, asparagine 342, asparagine 358, asparagine 377, asparagine 468, asparagine 517, asparagine 545, asparagine 559, asparagine 581, asparagine 633, asparagine 714, asparagine 875, asparagine 914, asparagine 955, asparagine 989, asparagine 1018, asparagine 1042, asparagine 1093, asparagine 1134, asparagine 1197, asparagine 1217, asparagine 1252, asparagine 1276, asparagine 1304, and asparagine 1419 each carry an N-linked (GlcNAc...) asparagine glycan.

This sequence belongs to the Sulfolobales SlaA family. The mushroom-shaped unit cells of the Sulfolobales' S-layers may consist of three SlaB subunits and six SlaA subunits. Glycosylated. C-terminal glycosylation sites are modified with a heterogeneous family of glycans, with the largest having a composition Glc(1)Man(2)GlcNAc(2) plus 6-sulfoquinovose (QuiS).

It is found in the secreted. The protein resides in the cell wall. It localises to the S-layer. Its function is as follows. S-layer large protein. May form the highly ordered outer sheath. This Sulfolobus acidocaldarius (strain ATCC 33909 / DSM 639 / JCM 8929 / NBRC 15157 / NCIMB 11770) protein is S-layer protein A.